The following is a 196-amino-acid chain: Large ribosomal subunit protein bL9 (196 aa).

Residues 174 to 196 (QAAADLLEGGAGQQASEYTEAQA) are disordered. Over residues 186–196 (QQASEYTEAQA) the composition is skewed to polar residues.

It belongs to the bacterial ribosomal protein bL9 family.

In terms of biological role, binds to the 23S rRNA. This Phenylobacterium zucineum (strain HLK1) protein is Large ribosomal subunit protein bL9.